A 158-amino-acid chain; its full sequence is Phosphopantetheine adenylyltransferase (158 aa).

Serine 10 contacts substrate. Residues 10–11 and histidine 18 contribute to the ATP site; that span reads SF. Positions 42, 74, and 88 each coordinate substrate. ATP is bound by residues 89 to 91, glutamate 99, and 124 to 130; these read GLR and YANISSS.

This sequence belongs to the bacterial CoaD family. In terms of assembly, homohexamer. The cofactor is Mg(2+).

It is found in the cytoplasm. It catalyses the reaction (R)-4'-phosphopantetheine + ATP + H(+) = 3'-dephospho-CoA + diphosphate. It participates in cofactor biosynthesis; coenzyme A biosynthesis; CoA from (R)-pantothenate: step 4/5. Reversibly transfers an adenylyl group from ATP to 4'-phosphopantetheine, yielding dephospho-CoA (dPCoA) and pyrophosphate. The protein is Phosphopantetheine adenylyltransferase of Vesicomyosocius okutanii subsp. Calyptogena okutanii (strain HA).